Consider the following 177-residue polypeptide: ATP synthase subunit delta (177 aa).

The protein belongs to the ATPase delta chain family. As to quaternary structure, F-type ATPases have 2 components, F(1) - the catalytic core - and F(0) - the membrane proton channel. F(1) has five subunits: alpha(3), beta(3), gamma(1), delta(1), epsilon(1). F(0) has three main subunits: a(1), b(2) and c(10-14). The alpha and beta chains form an alternating ring which encloses part of the gamma chain. F(1) is attached to F(0) by a central stalk formed by the gamma and epsilon chains, while a peripheral stalk is formed by the delta and b chains.

Its subcellular location is the cell membrane. Functionally, f(1)F(0) ATP synthase produces ATP from ADP in the presence of a proton or sodium gradient. F-type ATPases consist of two structural domains, F(1) containing the extramembraneous catalytic core and F(0) containing the membrane proton channel, linked together by a central stalk and a peripheral stalk. During catalysis, ATP synthesis in the catalytic domain of F(1) is coupled via a rotary mechanism of the central stalk subunits to proton translocation. Its function is as follows. This protein is part of the stalk that links CF(0) to CF(1). It either transmits conformational changes from CF(0) to CF(1) or is implicated in proton conduction. This Macrococcus caseolyticus (strain JCSC5402) (Macrococcoides caseolyticum) protein is ATP synthase subunit delta.